Consider the following 215-residue polypeptide: Probable transaldolase (215 aa).

K83 functions as the Schiff-base intermediate with substrate in the catalytic mechanism.

It belongs to the transaldolase family. Type 3B subfamily.

Its subcellular location is the cytoplasm. The enzyme catalyses D-sedoheptulose 7-phosphate + D-glyceraldehyde 3-phosphate = D-erythrose 4-phosphate + beta-D-fructose 6-phosphate. It functions in the pathway carbohydrate degradation; pentose phosphate pathway; D-glyceraldehyde 3-phosphate and beta-D-fructose 6-phosphate from D-ribose 5-phosphate and D-xylulose 5-phosphate (non-oxidative stage): step 2/3. Its function is as follows. Transaldolase is important for the balance of metabolites in the pentose-phosphate pathway. This Anaeromyxobacter sp. (strain Fw109-5) protein is Probable transaldolase.